The sequence spans 330 residues: MNSALPEDVKNLLTELETFLLDVLKAETLSKKGKEKKEILIKRLKDIKHSYPQEFQDKAEDDDQEENDGFPLPPDAVSLASDRDKDEDLPYDGSFYPPVAAQDLEYLKAGYLEKRRKDHSFFASEWQKRWCVFTNSLFYYYGSDKDKQQKGAFSLDGYRAKMNDTLRKDAKKDCCFEIFAPDKRVYQFAASSPKEAEEWINAIMNSRGIIATEDEELYDDVNQEIDASLEEDIYEELPEESEKPVTETETQKATPVPVNNTSGKENTDYANFYRGLWDCTGDHPDELSFKHGDTIYIISKEYNTYGWWVGEMKGTIGLVPKAYIIEMYDI.

Positions 57–84 (DKAEDDDQEENDGFPLPPDAVSLASDRD) are disordered. The segment covering 59 to 68 (AEDDDQEEND) has biased composition (acidic residues). Residues 105 to 208 (EYLKAGYLEK…WINAIMNSRG (104 aa)) form the PH domain. The interval 236-261 (ELPEESEKPVTETETQKATPVPVNNT) is disordered. Over residues 240-250 (ESEKPVTETET) the composition is skewed to basic and acidic residues. A compositionally biased stretch (polar residues) spans 251 to 261 (QKATPVPVNNT). The region spanning 268 to 329 (DYANFYRGLW…PKAYIIEMYD (62 aa)) is the SH3 domain.

Belongs to the SKAP family. Phosphorylated on tyrosines.

The protein resides in the cytoplasm. Its function is as follows. May be involved in B-cell and macrophage adhesion processes. May play a role in src signaling pathway. The protein is Src kinase-associated phosphoprotein 2-B (skap2-b) of Xenopus laevis (African clawed frog).